Here is a 658-residue protein sequence, read N- to C-terminus: Threonine--tRNA ligase (658 aa).

The TGS domain occupies Met-1–Thr-64. A catalytic region spans residues Asp-246–Pro-548. Cys-343, His-394, and His-525 together coordinate Zn(2+).

The protein belongs to the class-II aminoacyl-tRNA synthetase family. In terms of assembly, homodimer. Requires Zn(2+) as cofactor.

Its subcellular location is the cytoplasm. The catalysed reaction is tRNA(Thr) + L-threonine + ATP = L-threonyl-tRNA(Thr) + AMP + diphosphate + H(+). Its function is as follows. Catalyzes the attachment of threonine to tRNA(Thr) in a two-step reaction: L-threonine is first activated by ATP to form Thr-AMP and then transferred to the acceptor end of tRNA(Thr). Also edits incorrectly charged L-seryl-tRNA(Thr). The chain is Threonine--tRNA ligase from Brucella melitensis biotype 2 (strain ATCC 23457).